Consider the following 67-residue polypeptide: Putative ATP synthase subunit epsilon, mitochondrial (67 aa).

It belongs to the eukaryotic ATPase epsilon family. F-type ATPases have 2 components, CF(1) - the catalytic core - and CF(0) - the membrane proton channel. CF(1) has five subunits: alpha(3), beta(3), gamma(1), delta(1), epsilon(1). CF(0) seems to have nine subunits: a, b, c, d, e, f, g, F6 and 8 (or A6L).

The protein resides in the mitochondrion. It is found in the mitochondrion inner membrane. Mitochondrial membrane ATP synthase (F(1)F(0) ATP synthase or Complex V) produces ATP from ADP in the presence of a proton gradient across the membrane which is generated by electron transport complexes of the respiratory chain. F-type ATPases consist of two structural domains, F(1) - containing the extramembraneous catalytic core, and F(0) - containing the membrane proton channel, linked together by a central stalk and a peripheral stalk. During catalysis, ATP synthesis in the catalytic domain of F(1) is coupled via a rotary mechanism of the central stalk subunits to proton translocation. Part of the complex F(1) domain and of the central stalk which is part of the complex rotary element. Rotation of the central stalk against the surrounding alpha(3)beta(3) subunits leads to hydrolysis of ATP in three separate catalytic sites on the beta subunits. This chain is Putative ATP synthase subunit epsilon, mitochondrial (atp15), found in Schizosaccharomyces pombe (strain 972 / ATCC 24843) (Fission yeast).